The sequence spans 268 residues: Fibroblast growth factor 5 (268 aa).

An N-terminal signal peptide occupies residues 1 to 20 (MSLSFLLLLFFSHLILSAWA). The tract at residues 26–81 (LAPKGQPGPAATDRNPRGSSSRQSSSSAMSSSSASSSPAASLGSQGSGLEQSSFQW) is disordered. The span at 43–80 (GSSSRQSSSSAMSSSSASSSPAASLGSQGSGLEQSSFQ) shows a compositional bias: low complexity. Asn-110 carries an N-linked (GlcNAc...) asparagine glycan. Residues 233-255 (VPEKKKPPSPIKPKIPLSAPRKN) are disordered.

This sequence belongs to the heparin-binding growth factors family. Interacts with FGFR1 and FGFR2. Affinity between fibroblast growth factors (FGFs) and their receptors is increased by heparan sulfate glycosaminoglycans that function as coreceptors. As to expression, expressed in neonatal brain.

The protein localises to the secreted. In terms of biological role, plays an important role in the regulation of cell proliferation and cell differentiation. Required for normal regulation of the hair growth cycle. Functions as an inhibitor of hair elongation by promoting progression from anagen, the growth phase of the hair follicle, into catagen the apoptosis-induced regression phase. The sequence is that of Fibroblast growth factor 5 (FGF5) from Homo sapiens (Human).